A 426-amino-acid chain; its full sequence is Probable alpha-galactosidase B (426 aa).

A signal peptide spans 1-13 (MSRSKTRQGKLPA). 2 disulfides stabilise this stretch: cysteine 24–cysteine 56 and cysteine 106–cysteine 136. The active-site Nucleophile is aspartate 134. Asparagine 141 and asparagine 159 each carry an N-linked (GlcNAc...) asparagine glycan. 204 to 208 (EWGQA) lines the substrate pocket. N-linked (GlcNAc...) asparagine glycosylation is present at asparagine 215. Aspartate 226 serves as the catalytic Proton donor. Asparagine 265 is a glycosylation site (N-linked (GlcNAc...) asparagine).

This sequence belongs to the glycosyl hydrolase 27 family.

The protein localises to the secreted. The enzyme catalyses Hydrolysis of terminal, non-reducing alpha-D-galactose residues in alpha-D-galactosides, including galactose oligosaccharides, galactomannans and galactolipids.. Its function is as follows. Hydrolyzes a variety of simple alpha-D-galactoside as well as more complex molecules such as oligosaccharides and polysaccharides. The protein is Probable alpha-galactosidase B (aglB) of Aspergillus fumigatus (strain CBS 144.89 / FGSC A1163 / CEA10) (Neosartorya fumigata).